A 213-amino-acid chain; its full sequence is NADH-quinone oxidoreductase subunit B (213 aa).

[4Fe-4S] cluster-binding residues include cysteine 38, cysteine 39, cysteine 104, and cysteine 133. The interval 172 to 213 (IMPENTNRFPGQLEKPKTSTLTLEAPDADDAEEASTPEPVAA) is disordered. Over residues 197–206 (PDADDAEEAS) the composition is skewed to acidic residues.

This sequence belongs to the complex I 20 kDa subunit family. In terms of assembly, NDH-1 is composed of 14 different subunits. Subunits NuoB, C, D, E, F, and G constitute the peripheral sector of the complex. [4Fe-4S] cluster is required as a cofactor.

The protein localises to the cell inner membrane. It carries out the reaction a quinone + NADH + 5 H(+)(in) = a quinol + NAD(+) + 4 H(+)(out). Functionally, NDH-1 shuttles electrons from NADH, via FMN and iron-sulfur (Fe-S) centers, to quinones in the respiratory chain. The immediate electron acceptor for the enzyme in this species is believed to be a menaquinone. Couples the redox reaction to proton translocation (for every two electrons transferred, four hydrogen ions are translocated across the cytoplasmic membrane), and thus conserves the redox energy in a proton gradient. This chain is NADH-quinone oxidoreductase subunit B (nuoB), found in Salinibacter ruber (strain DSM 13855 / M31).